We begin with the raw amino-acid sequence, 178 residues long: Large ribosomal subunit protein uL6 (178 aa).

This sequence belongs to the universal ribosomal protein uL6 family. As to quaternary structure, part of the 50S ribosomal subunit.

This protein binds to the 23S rRNA, and is important in its secondary structure. It is located near the subunit interface in the base of the L7/L12 stalk, and near the tRNA binding site of the peptidyltransferase center. The chain is Large ribosomal subunit protein uL6 from Campylobacter fetus subsp. fetus (strain 82-40).